We begin with the raw amino-acid sequence, 920 residues long: Anillin-related medial ring protein mid1 (920 aa).

The disordered stretch occupies residues 1 to 452 (MKEQEFSYRE…LSSEDLRHPS (452 aa)). Serine 15 and serine 24 each carry phosphoserine. Threonine 34 is modified (phosphothreonine). Phosphoserine is present on residues serine 46 and serine 62. Residues 69 to 81 (LNVATDLLESLDL) carry the Nuclear export sequence (NES) 1 motif. Serine 95 carries the post-translational modification Phosphoserine. Residues 461-481 (RTYSNYCENEPNKSSQSLVSS) are compositionally biased toward polar residues. Phosphoserine is present on serine 531. Residues 538–561 (DLPSQDKSTSYEVPNGTENQSPRP) are disordered. A compositionally biased stretch (polar residues) spans 542-561 (QDKSTSYEVPNGTENQSPRP). Positions 551-920 (PNGTENQSPR…WLQEYVNFMA (370 aa)) are cryptic lipid-binding C2 domain. The Nuclear localization sequence (NLS) signature appears at 681 to 710 (RKFFDKLFNRRKKRKLNKAAAVENSKAKKS). The short motif at 763-773 (LGNLTLTCLYI) is the Nuclear export sequence (NES) 2 element. The region spanning 802–901 (LYNEGYLYRL…WLQVMNSRSF (100 aa)) is the PH domain.

As to quaternary structure, homodimer. Interacts with blt1 and cdr2. Interacts with gef2. Interacts with plo1 and rng2. Interacts with fhk2 and sep1. Interacts with clp1. Post-translationally, phosphorylated. At the onset of mitosis, becomes hyperphosphorylated, leaves the nucleus, and forms a medial ring. Phosphorylation by plo1 and other kinases may contribute to solubilizing mid1 for export from the nucleus. Phosphorylation by sid2 drives removal from the cortex at the actomyosin contractile ring constriction onset.

It is found in the nucleus. The protein localises to the cytoplasm. It localises to the cell cortex. The protein resides in the cytoskeleton. Functionally, scaffold protein that anchors the contractile ring (CR) at the cell equator during cytokinesis. At the onset of mitosis, membrane-bound oligomers of mid1 assemble recruitment platforms for cytokinetic ring components at the medial cortex and stabilize the ring position during its compaction. Recruits dephosphorylated myo2, but also rng2, clp1 and cdc15 to nodes and to place cytokinetic nodes around the cell equator the medial cortex to promote the ring assembly in cooperation with F-actin. Necessary to stabilize the mitotic spindle perpendicular to the axis of cell division. Also recruits the cdr2 kinase to the CR. Its function is as follows. In the nucleus, binds to the promoter regions of M-G1 transcribed genes to negatively regulate their expression. The protein is Anillin-related medial ring protein mid1 of Schizosaccharomyces pombe (strain 972 / ATCC 24843) (Fission yeast).